Reading from the N-terminus, the 307-residue chain is Ribosomal RNA small subunit methyltransferase H (307 aa).

S-adenosyl-L-methionine-binding positions include 32-34 (AGH), D51, I82, D99, and Q106.

This sequence belongs to the methyltransferase superfamily. RsmH family.

It localises to the cytoplasm. It catalyses the reaction cytidine(1402) in 16S rRNA + S-adenosyl-L-methionine = N(4)-methylcytidine(1402) in 16S rRNA + S-adenosyl-L-homocysteine + H(+). In terms of biological role, specifically methylates the N4 position of cytidine in position 1402 (C1402) of 16S rRNA. The chain is Ribosomal RNA small subunit methyltransferase H from Campylobacter concisus (strain 13826).